The sequence spans 336 residues: Probable allantoicase 2 (336 aa).

Belongs to the allantoicase family.

The enzyme catalyses allantoate + H2O = (S)-ureidoglycolate + urea. The protein operates within nitrogen metabolism; (S)-allantoin degradation; (S)-ureidoglycolate from allantoate (aminidohydrolase route): step 1/1. This chain is Probable allantoicase 2, found in Burkholderia mallei (strain ATCC 23344).